A 425-amino-acid polypeptide reads, in one-letter code: Glutamyl-tRNA reductase (425 aa).

Substrate contacts are provided by residues 49 to 52, Ser109, 114 to 116, and Gln120; these read TCNR and EGQ. The Nucleophile role is filled by Cys50. NADP(+) is bound at residue 189–194; sequence GAGETG.

It belongs to the glutamyl-tRNA reductase family. As to quaternary structure, homodimer.

It carries out the reaction (S)-4-amino-5-oxopentanoate + tRNA(Glu) + NADP(+) = L-glutamyl-tRNA(Glu) + NADPH + H(+). Its pathway is porphyrin-containing compound metabolism; protoporphyrin-IX biosynthesis; 5-aminolevulinate from L-glutamyl-tRNA(Glu): step 1/2. The protein operates within porphyrin-containing compound metabolism; chlorophyll biosynthesis. Its function is as follows. Catalyzes the NADPH-dependent reduction of glutamyl-tRNA(Glu) to glutamate 1-semialdehyde (GSA). The protein is Glutamyl-tRNA reductase of Pelodictyon phaeoclathratiforme (strain DSM 5477 / BU-1).